The primary structure comprises 144 residues: Bacilliredoxin BT9727_3899 (144 aa).

Belongs to the bacilliredoxin family.

In Bacillus thuringiensis subsp. konkukian (strain 97-27), this protein is Bacilliredoxin BT9727_3899.